Consider the following 407-residue polypeptide: MAMFVRTSSSTHDEERMLPIEGAPRRRPPVKFIFPPPPLSSLPGFGRPRGYAGPTVIDMSAPDDVFAEDTPSPPATPLDLQISPDQSSGESEYDEDEEDEDEEENDDVQEEDEPEGYPADFFQPLSHLRPRPLARRAHTPKPVAVVAGRVRSSTDTAESEASMGWVSQDDGFSPAGLSPSDDEGVAILEPMAAYTGTGAYGLSPASRNSVPGTQSSPYSDPDEGPSWRPLRAAPTAIVDLTSDSDSDDSSNSPDVNNEAAFTDARHFSHQPPSSEEDGEDQGEVLSQRIGLMDVGQKRKRQSTASSGSEDVVRCQRQPNLSRKAVASVIIISSGSDTDEEPSSAVSVIVSPSSTKGHLPTQSPSTSAHSISSGSTTTAGSRCSDPTRILASTPPLCGNGAYNWPWLD.

The segment covering 1-10 has biased composition (polar residues); sequence MAMFVRTSSS. Disordered stretches follow at residues 1-183, 196-318, and 332-407; these read MAMF…SDDE, GTGA…QRQP, and SSGS…PWLD. The residue at position 41 (serine 41) is a Phosphoserine; by host TBK1 and IKKE. The span at 91 to 115 shows a compositional bias: acidic residues; the sequence is SEYDEDEEDEDEEENDDVQEEDEPE. The span at 128–139 shows a compositional bias: basic residues; it reads LRPRPLARRAHT. Serine 162 bears the Phosphoserine; by host TBK1 and IKKE mark. A compositionally biased stretch (polar residues) spans 205-218; sequence ASRNSVPGTQSSPY. Positions 284 to 294 match the Nuclear export signal motif; it reads VLSQRIGLMDV. A Nuclear localization signal motif is present at residues 297–300; sequence KRKR. 2 stretches are compositionally biased toward low complexity: residues 342-353 and 360-383; these read SSAVSVIVSPSS and TQSPSTSAHSISSGSTTTAGSRCS.

Interacts with host IRF7. Interacts with host RPS6KA1. Interacts with host RAB11FIP5; this interaction results in the lysosomal degradation of ORF45 and the inhibition of viral particle release. Interacts with host p53/TP53; this interaction down-regulates p53/TP53 signaling pathway. Interacts with the N-terminal part of host NLRP1; relieving autoinhibition of the NLRP1 inflammasome. Post-translationally, phosphorylated on Ser-41 and Ser-162 by host IKBKE and TBK1.

The protein resides in the virion tegument. The protein localises to the host cytoplasm. It is found in the host nucleus. Its subcellular location is the host Golgi apparatus. Prevents the establishment of cellular antiviral state by blocking virus-induced phosphorylation and activation of host interferon regulatory factor 7/IRF7, a transcription factor critical for the induction of interferons alpha and beta. Mechanistically, ORF45 competes with the associated IRF7 and inhibits its phosphorylation by IKBKE or TBK1 by acting as an alternative substrate. Acts as an activator of the NLRP1 inflammasome via interaction with the N-terminal part of host NLRP1: interaction promotes translocation of the N-terminal part of NLRP1 into the nucleus, relieving autoinhibition of the NLRP1 inflammasome and leading to its activation. Also plays a role in promoting the late transcription and translation of viral lytic genes by constitutively activating host extracellular signal-regulated kinase (ERK)-p90 ribosomal S6 kinase/RPS6KA1. In addition, supports the viral replication cycle by modulating host p53/TP53 signaling pathway. Interacts with host p53/TP53 and prevents its interaction with the deubiquitinase USP7, leading to sequestration of P53/TP53 in the host cytoplasm thereby diminishing its transcriptional activity. The sequence is that of Protein ORF45 (ORF45) from Homo sapiens (Human).